A 149-amino-acid polypeptide reads, in one-letter code: MKLILTQEVAGLGGPGDVVEVRDGYGRNYLLPKRLAMPASPGAVKQVALIKRAREVREIRDLDQARALRDQLEALPVTLPARAGSGGRLFGSVTPDDIAAAVHAAGGPKLDKRRIEISGPIKTIGSHQVTVRLHPEVSATVSVEVVPAS.

This sequence belongs to the bacterial ribosomal protein bL9 family.

Functionally, binds to the 23S rRNA. In Acidothermus cellulolyticus (strain ATCC 43068 / DSM 8971 / 11B), this protein is Large ribosomal subunit protein bL9.